We begin with the raw amino-acid sequence, 218 residues long: UPF0502 protein Geob_1184 (218 aa).

Belongs to the UPF0502 family.

In Geotalea daltonii (strain DSM 22248 / JCM 15807 / FRC-32) (Geobacter daltonii), this protein is UPF0502 protein Geob_1184.